A 462-amino-acid chain; its full sequence is Bifunctional protein HldE (462 aa).

Residues methionine 1–proline 309 are ribokinase. An ATP-binding site is contributed by asparagine 186–glutamate 189. Residue aspartate 254 is part of the active site. Residues phenylalanine 336–cysteine 462 form a cytidylyltransferase region.

It in the N-terminal section; belongs to the carbohydrate kinase PfkB family. The protein in the C-terminal section; belongs to the cytidylyltransferase family. Homodimer.

It carries out the reaction D-glycero-beta-D-manno-heptose 7-phosphate + ATP = D-glycero-beta-D-manno-heptose 1,7-bisphosphate + ADP + H(+). The catalysed reaction is D-glycero-beta-D-manno-heptose 1-phosphate + ATP + H(+) = ADP-D-glycero-beta-D-manno-heptose + diphosphate. The protein operates within nucleotide-sugar biosynthesis; ADP-L-glycero-beta-D-manno-heptose biosynthesis; ADP-L-glycero-beta-D-manno-heptose from D-glycero-beta-D-manno-heptose 7-phosphate: step 1/4. Its pathway is nucleotide-sugar biosynthesis; ADP-L-glycero-beta-D-manno-heptose biosynthesis; ADP-L-glycero-beta-D-manno-heptose from D-glycero-beta-D-manno-heptose 7-phosphate: step 3/4. Its function is as follows. Catalyzes the phosphorylation of D-glycero-D-manno-heptose 7-phosphate at the C-1 position to selectively form D-glycero-beta-D-manno-heptose-1,7-bisphosphate. Catalyzes the ADP transfer from ATP to D-glycero-beta-D-manno-heptose 1-phosphate, yielding ADP-D-glycero-beta-D-manno-heptose. In Nitratiruptor sp. (strain SB155-2), this protein is Bifunctional protein HldE.